We begin with the raw amino-acid sequence, 630 residues long: Sodium-dependent serotonin transporter (630 aa).

Topologically, residues Met-1 to Asp-87 are cytoplasmic. The residue at position 47 (Tyr-47) is a Phosphotyrosine. The chain crosses the membrane as a helical span at residues Phe-88–Asn-112. Gly-94, Ala-96, Val-97, Asp-98, and Asn-101 together coordinate Na(+). Asp-98 lines the serotonin pocket. Topologically, residues Gly-113–Gly-115 are extracellular. The chain crosses the membrane as a helical span at residues Ala-116–Met-135. The Cytoplasmic portion of the chain corresponds to Glu-136–Gly-160. The residue at position 142 (Tyr-142) is a Phosphotyrosine. Residues Ile-161–Tyr-186 traverse the membrane as a helical segment. The Extracellular portion of the chain corresponds to Leu-187–Ser-252. A disulfide bond links Cys-200 and Cys-209. 2 N-linked (GlcNAc...) asparagine glycosylation sites follow: Asn-208 and Asn-217. Residues Trp-253–Trp-271 form a helical membrane-spanning segment. At Lys-272–Ser-277 the chain is on the cytoplasmic side. At Thr-276 the chain carries Phosphothreonine. The helical transmembrane segment at Gly-278–Val-297 threads the bilayer. Residues Arg-298 to Gly-324 lie on the Extracellular side of the membrane. A helical membrane pass occupies residues Val-325–Phe-347. Residue Ser-336 coordinates Na(+). Residues Ala-348–Asp-360 lie on the Cytoplasmic side of the membrane. The chain crosses the membrane as a helical span at residues Ala-361 to Phe-380. Asn-368 contributes to the Na(+) binding site. The Extracellular portion of the chain corresponds to Thr-381–Thr-421. A helical membrane pass occupies residues Phe-422 to Leu-443. 3 residues coordinate Na(+): Leu-434, Asp-437, and Ser-438. A serotonin-binding site is contributed by Thr-439. Over Glu-444–Glu-463 the chain is Cytoplasmic. Residues Trp-464–Phe-483 form a helical membrane-spanning segment. Over Gly-484 to Glu-494 the chain is Extracellular. Glu-494 and Tyr-495 together coordinate serotonin. Residues Tyr-495–Tyr-516 form a helical membrane-spanning segment. Residues Gly-517–Arg-538 are Cytoplasmic-facing. Residues Ile-539–Met-558 form a helical membrane-spanning segment. Serotonin contacts are provided by Phe-556 and Ser-559. The Extracellular segment spans residues Ser-559–Ser-574. A helical transmembrane segment spans residues Val-575–Tyr-595. The Cytoplasmic portion of the chain corresponds to Arg-596–Val-630. The interaction with RAB4A stretch occupies residues Thr-616–Asp-624.

It belongs to the sodium:neurotransmitter symporter (SNF) (TC 2.A.22) family. SLC6A4 subfamily. Monomer or homooligomer. Interacts (via C-terminus) with SCAMP2; the interaction is direct and retains transporter molecules intracellularly. Interacts with filamentous actin and STX1A. Interacts (via the N-terminus) with STX1A (via the H3 domain); this interaction regulates SLC4A6 channel conductance. Interacts with SEC23A, SEC24C and PATJ. Interacts with NOS1; the interaction may diminish the cell surface localization of SERT in the brain and, correspondingly, reduce serotonin reuptake. Interacts with TGFB1I1. Interacts with ITGAV:ITGB3. Interacts (via C-terminus) with ITGB3; this interaction regulates SLC6A4 trafficking. In terms of processing, phosphorylation at Thr-276 increases 5-HT uptake and is required for cGMP-mediated SERT regulation. In terms of tissue distribution, expressed in the intestinal crypt epithelial cells (at protein level).

It is found in the cell membrane. It localises to the endomembrane system. The protein localises to the endosome membrane. Its subcellular location is the synapse. The protein resides in the cell junction. It is found in the focal adhesion. It localises to the cell projection. The protein localises to the neuron projection. It carries out the reaction serotonin(out) + K(+)(in) + Na(+)(out) + H(+)(in) = serotonin(in) + K(+)(out) + Na(+)(in) + H(+)(out). Its function is as follows. Serotonin transporter that cotransports serotonin with one Na(+) ion in exchange for one K(+) ion and possibly one proton in an overall electroneutral transport cycle. Transports serotonin across the plasma membrane from the extracellular compartment to the cytosol thus limiting serotonin intercellular signaling. Essential for serotonin homeostasis in the central nervous system. In the developing somatosensory cortex, acts in glutamatergic neurons to control serotonin uptake and its trophic functions accounting for proper spatial organization of cortical neurons and elaboration of sensory circuits. In the mature cortex, acts primarily in brainstem raphe neurons to mediate serotonin uptake from the synaptic cleft back into the pre-synaptic terminal thus terminating serotonin signaling at the synapse. Modulates mucosal serotonin levels in the gastrointestinal tract through uptake and clearance of serotonin in enterocytes. Required for enteric neurogenesis and gastrointestinal reflexes. Regulates blood serotonin levels by ensuring rapid high affinity uptake of serotonin from plasma to platelets, where it is further stored in dense granules via vesicular monoamine transporters and then released upon stimulation. Mechanistically, the transport cycle starts with an outward-open conformation having Na1(+) and Cl(-) sites occupied. The binding of a second extracellular Na2(+) ion and serotonin substrate leads to structural changes to outward-occluded to inward-occluded to inward-open, where the Na2(+) ion and serotonin are released into the cytosol. Binding of intracellular K(+) ion induces conformational transitions to inward-occluded to outward-open and completes the cycle by releasing K(+) possibly together with a proton bound to Asp-98 into the extracellular compartment. Na1(+) and Cl(-) ions remain bound throughout the transport cycle. Additionally, displays serotonin-induced channel-like conductance for monovalent cations, mainly Na(+) ions. The channel activity is uncoupled from the transport cycle and may contribute to the membrane resting potential or excitability. This Cavia porcellus (Guinea pig) protein is Sodium-dependent serotonin transporter (SLC6A4).